Reading from the N-terminus, the 77-residue chain is ATP synthase subunit c (77 aa).

A run of 2 helical transmembrane segments spans residues 10-30 (IAVALLIGFGAIGTAVGFGNM) and 57-77 (GLIDAVAMIGVGIAMVLLFVL).

Belongs to the ATPase C chain family. F-type ATPases have 2 components, F(1) - the catalytic core - and F(0) - the membrane proton channel. F(1) has five subunits: alpha(3), beta(3), gamma(1), delta(1), epsilon(1). F(0) has three main subunits: a(1), b(2) and c(10-14). The alpha and beta chains form an alternating ring which encloses part of the gamma chain. F(1) is attached to F(0) by a central stalk formed by the gamma and epsilon chains, while a peripheral stalk is formed by the delta and b chains.

It is found in the cell inner membrane. Functionally, f(1)F(0) ATP synthase produces ATP from ADP in the presence of a proton or sodium gradient. F-type ATPases consist of two structural domains, F(1) containing the extramembraneous catalytic core and F(0) containing the membrane proton channel, linked together by a central stalk and a peripheral stalk. During catalysis, ATP synthesis in the catalytic domain of F(1) is coupled via a rotary mechanism of the central stalk subunits to proton translocation. Its function is as follows. Key component of the F(0) channel; it plays a direct role in translocation across the membrane. A homomeric c-ring of between 10-14 subunits forms the central stalk rotor element with the F(1) delta and epsilon subunits. This chain is ATP synthase subunit c, found in Pseudoalteromonas translucida (strain TAC 125).